We begin with the raw amino-acid sequence, 268 residues long: Tryptophan synthase alpha chain (268 aa).

Catalysis depends on proton acceptor residues glutamate 49 and aspartate 60.

It belongs to the TrpA family. As to quaternary structure, tetramer of two alpha and two beta chains.

It catalyses the reaction (1S,2R)-1-C-(indol-3-yl)glycerol 3-phosphate + L-serine = D-glyceraldehyde 3-phosphate + L-tryptophan + H2O. The protein operates within amino-acid biosynthesis; L-tryptophan biosynthesis; L-tryptophan from chorismate: step 5/5. Its function is as follows. The alpha subunit is responsible for the aldol cleavage of indoleglycerol phosphate to indole and glyceraldehyde 3-phosphate. This chain is Tryptophan synthase alpha chain, found in Pseudomonas aeruginosa (strain LESB58).